Consider the following 278-residue polypeptide: Putative pyruvate, phosphate dikinase regulatory protein (278 aa).

156–163 (GVSRTSKT) provides a ligand contact to ADP.

Belongs to the pyruvate, phosphate/water dikinase regulatory protein family. PDRP subfamily.

It catalyses the reaction N(tele)-phospho-L-histidyl/L-threonyl-[pyruvate, phosphate dikinase] + ADP = N(tele)-phospho-L-histidyl/O-phospho-L-threonyl-[pyruvate, phosphate dikinase] + AMP + H(+). The catalysed reaction is N(tele)-phospho-L-histidyl/O-phospho-L-threonyl-[pyruvate, phosphate dikinase] + phosphate + H(+) = N(tele)-phospho-L-histidyl/L-threonyl-[pyruvate, phosphate dikinase] + diphosphate. Bifunctional serine/threonine kinase and phosphorylase involved in the regulation of the pyruvate, phosphate dikinase (PPDK) by catalyzing its phosphorylation/dephosphorylation. This is Putative pyruvate, phosphate dikinase regulatory protein from Lactobacillus acidophilus (strain ATCC 700396 / NCK56 / N2 / NCFM).